The chain runs to 843 residues: Translation initiation factor IF-2 (843 aa).

Disordered stretches follow at residues 50 to 72 (LKSS…KTTS) and 94 to 260 (QRSP…TGPV). Over residues 96–135 (SPEEIQAEQKREQDERRAAENAARDKVDADVRQRNEEQAR) the composition is skewed to basic and acidic residues. Low complexity predominate over residues 139–173 (TATAAAAPAAKAEPAPAAAAPAPAPVVADAPASED). Basic and acidic residues-rich tracts occupy residues 174–203 (AAAR…RGEA) and 227–236 (TTDEESDGAR). The span at 237 to 250 (RGRGGKGKLKKRNQ) shows a compositional bias: basic residues. The tr-type G domain maps to 343-516 (SRAPVVTVMG…EVLELTATPT (174 aa)). The segment at 352 to 359 (GHVDHGKT) is G1. 352–359 (GHVDHGKT) lines the GTP pocket. The segment at 377–381 (GITQH) is G2. The segment at 398 to 401 (DTPG) is G3. Residues 398 to 402 (DTPGH) and 452 to 455 (NKID) contribute to the GTP site. The interval 452–455 (NKID) is G4. Positions 488 to 490 (SAK) are G5.

This sequence belongs to the TRAFAC class translation factor GTPase superfamily. Classic translation factor GTPase family. IF-2 subfamily.

The protein localises to the cytoplasm. Its function is as follows. One of the essential components for the initiation of protein synthesis. Protects formylmethionyl-tRNA from spontaneous hydrolysis and promotes its binding to the 30S ribosomal subunits. Also involved in the hydrolysis of GTP during the formation of the 70S ribosomal complex. The sequence is that of Translation initiation factor IF-2 from Pseudomonas putida (strain W619).